Consider the following 185-residue polypeptide: Elongation factor P (185 aa).

The protein belongs to the elongation factor P family.

It localises to the cytoplasm. It functions in the pathway protein biosynthesis; polypeptide chain elongation. In terms of biological role, involved in peptide bond synthesis. Stimulates efficient translation and peptide-bond synthesis on native or reconstituted 70S ribosomes in vitro. Probably functions indirectly by altering the affinity of the ribosome for aminoacyl-tRNA, thus increasing their reactivity as acceptors for peptidyl transferase. This Listeria innocua serovar 6a (strain ATCC BAA-680 / CLIP 11262) protein is Elongation factor P.